Reading from the N-terminus, the 100-residue chain is Urease subunit gamma (100 aa).

This sequence belongs to the urease gamma subunit family. In terms of assembly, heterotrimer of UreA (gamma), UreB (beta) and UreC (alpha) subunits. Three heterotrimers associate to form the active enzyme.

It localises to the cytoplasm. The catalysed reaction is urea + 2 H2O + H(+) = hydrogencarbonate + 2 NH4(+). It functions in the pathway nitrogen metabolism; urea degradation; CO(2) and NH(3) from urea (urease route): step 1/1. The chain is Urease subunit gamma from Pseudomonas putida (strain W619).